Reading from the N-terminus, the 86-residue chain is RNA-binding protein Hfq (86 aa).

Positions 9 to 68 (DPYLNTLRKEKVGVSIYLVNGIKLQGTIESFDQFVILLKNTVSQMVYKHAISTVVPVRPI) constitute a Sm domain.

Belongs to the Hfq family. Homohexamer.

Its function is as follows. RNA chaperone that binds small regulatory RNA (sRNAs) and mRNAs to facilitate mRNA translational regulation in response to envelope stress, environmental stress and changes in metabolite concentrations. Also binds with high specificity to tRNAs. The sequence is that of RNA-binding protein Hfq from Pseudomonas fluorescens (strain Pf0-1).